A 315-amino-acid chain; its full sequence is Methionyl-tRNA formyltransferase (315 aa).

113 to 116 (SILP) is a (6S)-5,6,7,8-tetrahydrofolate binding site.

Belongs to the Fmt family.

It carries out the reaction L-methionyl-tRNA(fMet) + (6R)-10-formyltetrahydrofolate = N-formyl-L-methionyl-tRNA(fMet) + (6S)-5,6,7,8-tetrahydrofolate + H(+). Functionally, attaches a formyl group to the free amino group of methionyl-tRNA(fMet). The formyl group appears to play a dual role in the initiator identity of N-formylmethionyl-tRNA by promoting its recognition by IF2 and preventing the misappropriation of this tRNA by the elongation apparatus. The sequence is that of Methionyl-tRNA formyltransferase from Aliivibrio fischeri (strain MJ11) (Vibrio fischeri).